A 623-amino-acid polypeptide reads, in one-letter code: Chaperone protein DnaK (623 aa).

Position 174 is a phosphothreonine; by autocatalysis (Thr174). Disordered regions lie at residues 470–504 (ITIKSSSGLSDEEIKKMQKDAEEHAEEDKKRKEEV) and 578–623 (GGAQ…DPDK). Basic and acidic residues predominate over residues 481-504 (EEIKKMQKDAEEHAEEDKKRKEEV). Residues 578-604 (GGAQGAAGQAGPQGAQGGQPNNDNGSS) are compositionally biased toward low complexity. The segment covering 614–623 (GDFHKVDPDK) has biased composition (basic and acidic residues).

This sequence belongs to the heat shock protein 70 family.

In terms of biological role, acts as a chaperone. This is Chaperone protein DnaK from Lactobacillus gasseri (strain ATCC 33323 / DSM 20243 / BCRC 14619 / CIP 102991 / JCM 1131 / KCTC 3163 / NCIMB 11718 / NCTC 13722 / AM63).